Reading from the N-terminus, the 380-residue chain is Cytosolic acyl coenzyme A thioester hydrolase (380 aa).

The HotDog ACOT-type 1 domain maps to 50–168 (PCGACITGRI…TLWYVPLSLK (119 aa)). Asn-66 is a catalytic residue. N6-acetyllysine occurs at positions 168 and 198. The 115-residue stretch at 224–338 (SYSQSSLIHL…FFTYVSLSQE (115 aa)) folds into the HotDog ACOT-type 2 domain. The active site involves Asp-255. Position 283 is an N6-acetyllysine (Lys-283). Residues 350–380 (ETEDEKKRFEEGKGRYLQMKAKRQGHAEPQP) are disordered. Residues 353-363 (DEKKRFEEGKG) are compositionally biased toward basic and acidic residues.

Homohexamer. Isoform 4 is expressed exclusively in brain.

The protein localises to the cytoplasm. Its subcellular location is the cytosol. It localises to the mitochondrion. It catalyses the reaction hexadecanoyl-CoA + H2O = hexadecanoate + CoA + H(+). The catalysed reaction is octanoyl-CoA + H2O = octanoate + CoA + H(+). It carries out the reaction dodecanoyl-CoA + H2O = dodecanoate + CoA + H(+). The enzyme catalyses (9Z)-octadecenoyl-CoA + H2O = (9Z)-octadecenoate + CoA + H(+). It catalyses the reaction tetradecanoyl-CoA + H2O = tetradecanoate + CoA + H(+). The catalysed reaction is decanoyl-CoA + H2O = decanoate + CoA + H(+). It carries out the reaction octadecanoyl-CoA + H2O = octadecanoate + CoA + H(+). Its pathway is lipid metabolism; fatty acid metabolism. Functionally, catalyzes the hydrolysis of acyl-CoAs into free fatty acids and coenzyme A (CoASH), regulating their respective intracellular levels. Preferentially hydrolyzes palmitoyl-CoA, but has a broad specificity acting on other fatty acyl-CoAs with chain-lengths of C8-C18. May play an important physiological function in brain. This chain is Cytosolic acyl coenzyme A thioester hydrolase (ACOT7), found in Homo sapiens (Human).